We begin with the raw amino-acid sequence, 470 residues long: MSHKSDLIATNIQKYLQQHQQKELLRFITCGSVDDGKSTLIGRLLHDSKLIFEDQLASIVADSKKVGTQGDRLDLALLVDGLQSEREQGITIDVAYRYFSTDKRKFIIADTPGHEQYTRNMATGASNCDLAIILIDARKGLQTQTRRHNFICSLLGIKHVIVAVNKMDTVGYSQQIYKSIQDEYLKLAGSLQIPDIRFVPISALDGDNVVSKSPKMPWFRGSPLMHYLETIKIDYAYTDEFRFPVQLVCRPNSEFRGFQGTVVSGSAKIGDTIRVMPSGKITTIKSILSFDGKLNEAEAGQSITITTYDEIDISRGDMIVHKDAISHVSSMLRANIVWMSEQPLIEYKDYYIKFLTKQVIGSVNKFNYKTDINTLKEVACGTLELNEIATIELKLSEPVCFDSYQKNRTIGAFIIIDRLTNVTAGAGMVIKPLAANDKKDSTNDYSEFELELNALIRKHFPHWDAKNLRE.

The region spanning 22–238 is the tr-type G domain; it reads KELLRFITCG…ETIKIDYAYT (217 aa). A G1 region spans residues 31–38; that stretch reads GSVDDGKS. 31 to 38 is a binding site for GTP; sequence GSVDDGKS. A G2 region spans residues 89-93; that stretch reads GITID. The G3 stretch occupies residues 110-113; sequence DTPG. Residues 110-114 and 165-168 contribute to the GTP site; these read DTPGH and NKMD. Residues 165–168 form a G4 region; sequence NKMD. The interval 202–204 is G5; it reads SAL.

Belongs to the TRAFAC class translation factor GTPase superfamily. Classic translation factor GTPase family. CysN/NodQ subfamily. As to quaternary structure, heterodimer composed of CysD, the smaller subunit, and CysN.

The enzyme catalyses sulfate + ATP + H(+) = adenosine 5'-phosphosulfate + diphosphate. Its pathway is sulfur metabolism; hydrogen sulfide biosynthesis; sulfite from sulfate: step 1/3. Functionally, with CysD forms the ATP sulfurylase (ATPS) that catalyzes the adenylation of sulfate producing adenosine 5'-phosphosulfate (APS) and diphosphate, the first enzymatic step in sulfur assimilation pathway. APS synthesis involves the formation of a high-energy phosphoric-sulfuric acid anhydride bond driven by GTP hydrolysis by CysN coupled to ATP hydrolysis by CysD. The polypeptide is Sulfate adenylyltransferase subunit 1 (Francisella tularensis subsp. tularensis (strain SCHU S4 / Schu 4)).